Consider the following 393-residue polypeptide: GDP-4-keto-6-deoxy-D-mannose 3-dehydratase (393 aa).

N30–T33 contacts GDP-4-dehydro-alpha-D-rhamnose. The chain crosses the membrane as a helical span at residues Y53 to F73. Residues G60–S61, W92, E166, and S187 each bind pyridoxal 5'-phosphate. H192 acts as the Proton donor/acceptor in catalysis. H219 is a binding site for L-glutamate. R223 provides a ligand contact to GDP-4-dehydro-alpha-D-rhamnose. N252 contributes to the pyridoxal 5'-phosphate binding site. L-glutamate is bound at residue R254. A GDP-4-dehydro-alpha-D-rhamnose-binding site is contributed by E333.

Belongs to the DegT/DnrJ/EryC1 family. Homodimer. It depends on pyridoxal 5'-phosphate as a cofactor.

It is found in the cell membrane. The enzyme catalyses GDP-4-dehydro-alpha-D-rhamnose + L-glutamate = GDP-4-dehydro-3,6-dideoxy-alpha-D-mannose + 2-oxoglutarate + NH4(+). It participates in nucleotide-sugar metabolism; GDP-L-colitose biosynthesis. In terms of biological role, involved in the biosynthesis of L-colitose, a 3,6-dideoxyhexose present in the O-antigen region of lipopolysaccharides (LPS), where it serves as an antigenic determinant and is vital for bacterial defense and survival. Catalyzes the removal of the C3'-hydroxyl group from GDP-4-keto-6-deoxy-D-mannose via a combined transamination-deoxygenation reaction. The catalysis is initiated by a transamination step in which pyridoxal 5'-phosphate (PLP) is converted to pyridoxamine 5'-phosphate (PMP) in the presence of L-glutamate. This coenzyme then forms a Schiff base with GDP-4-keto-6-deoxy-D-mannose and the resulting adduct undergoes a PMP-mediated beta-dehydration reaction to give a sugar enamine intermediate, which after tautomerization and hydrolysis to release ammonia yields GDP-4-keto-3,6-dideoxy-D-mannose as a product. The sequence is that of GDP-4-keto-6-deoxy-D-mannose 3-dehydratase from Yersinia pseudotuberculosis.